We begin with the raw amino-acid sequence, 1709 residues long: Acrosomal protein KIAA1210 (1709 aa).

8 disordered regions span residues 207 to 226, 239 to 275, 451 to 663, 763 to 973, 1211 to 1382, 1408 to 1516, 1539 to 1571, and 1589 to 1653; these read PVRE…GSKA, PERS…SKVP, PNLD…AEKT, PPRS…MAVE, LKRG…SVNA, TKKF…GRGH, ADKQ…QSDY, and FKAH…KSVG. The span at 257–272 shows a compositional bias: basic residues; the sequence is PQQRSHISRTLPKPRS. The segment covering 473-490 has biased composition (basic and acidic residues); it reads EEEKSITKPKEINEKKLG. Composition is skewed to polar residues over residues 494–505 and 514–527; these read ADSSSQKQNNKT and DQAP…SQGY. Over residues 595–608 the composition is skewed to low complexity; the sequence is EQPTTSQPETTTPQ. Over residues 651–663 the composition is skewed to basic and acidic residues; that stretch reads PYHEDAASGAEKT. A compositionally biased stretch (acidic residues) spans 777-794; the sequence is EEVSSDSENIPEEGDGSE. Polar residues-rich tracts occupy residues 886-941, 1288-1299, 1332-1350, 1366-1376, and 1457-1469; these read KNQQ…QSDS, FKEQLSPRQLSQ, HSSQ…SSKG, PSSSPFQQQVH, and DGNN…LSNQ. The segment covering 1502–1513 has biased composition (low complexity); sequence SVPSGPISSSVG. Positions 1542 to 1552 are enriched in basic and acidic residues; the sequence is QQSRPKSESMA.

As to quaternary structure, interacts with TOP2B.

Its subcellular location is the cytoplasmic vesicle. The protein resides in the secretory vesicle. It is found in the acrosome. The chain is Acrosomal protein KIAA1210 from Homo sapiens (Human).